A 230-amino-acid chain; its full sequence is Demethylmenaquinone methyltransferase (230 aa).

S-adenosyl-L-methionine-binding positions include Thr-62, Asp-80, Asp-102 to Gly-103, and Ser-119.

This sequence belongs to the class I-like SAM-binding methyltransferase superfamily. MenG/UbiE family.

The catalysed reaction is a 2-demethylmenaquinol + S-adenosyl-L-methionine = a menaquinol + S-adenosyl-L-homocysteine + H(+). The protein operates within quinol/quinone metabolism; menaquinone biosynthesis; menaquinol from 1,4-dihydroxy-2-naphthoate: step 2/2. Functionally, methyltransferase required for the conversion of demethylmenaquinol (DMKH2) to menaquinol (MKH2). This Streptomyces griseus subsp. griseus (strain JCM 4626 / CBS 651.72 / NBRC 13350 / KCC S-0626 / ISP 5235) protein is Demethylmenaquinone methyltransferase.